We begin with the raw amino-acid sequence, 62 residues long: Small, acid-soluble spore protein A (62 aa).

The protein belongs to the alpha/beta-type SASP family.

SASP are bound to spore DNA. They are double-stranded DNA-binding proteins that cause DNA to change to an a-like conformation. They protect the DNA backbone from chemical and enzymatic cleavage and are thus involved in dormant spore's high resistance to UV light. This is Small, acid-soluble spore protein A (sasP-A) from Priestia megaterium (Bacillus megaterium).